Here is a 308-residue protein sequence, read N- to C-terminus: uncharacterized protein (308 aa).

The next 10 membrane-spanning stretches (helical) occupy residues 45-65 (LGLA…KIAL), 69-89 (SPFA…LPFL), 100-120 (IGIA…YTTA), 122-142 (NAGF…WLVY), 151-171 (VSGV…SGFN), 172-192 (IGDI…AMIS), 201-221 (TMLA…FAVF), 226-246 (FEIN…ATFV), 263-283 (AAVI…AVLA), and 285-305 (ILTP…IIVS). EamA domains lie at 52–166 (LIWG…FLSG) and 178–306 (LFCA…IVSL).

Belongs to the EamA transporter family.

The protein resides in the cell membrane. This is an uncharacterized protein from Archaeoglobus fulgidus (strain ATCC 49558 / DSM 4304 / JCM 9628 / NBRC 100126 / VC-16).